Consider the following 77-residue polypeptide: Envelope protein US9 homolog (77 aa).

A Di-leucine internalization motif motif is present at residues 12-13 (LL).

This sequence belongs to the alphaherpesvirinae envelope protein US9 family.

The chain is Envelope protein US9 homolog from Chlorocebus aethiops (Green monkey).